An 89-amino-acid chain; its full sequence is DNA/RNA-binding protein Alba (89 aa).

Belongs to the histone-like Alba family.

The protein localises to the cytoplasm. It localises to the chromosome. Its function is as follows. Binds double-stranded DNA tightly but without sequence specificity. Involved in DNA compaction. This is DNA/RNA-binding protein Alba from Methanococcus maripaludis (strain DSM 14266 / JCM 13030 / NBRC 101832 / S2 / LL).